The following is a 318-amino-acid chain: NADH-ubiquinone oxidoreductase chain 1 (318 aa).

8 consecutive transmembrane segments (helical) span residues 2 to 22, 70 to 90, 100 to 120, 147 to 167, 171 to 191, 217 to 237, 253 to 273, and 294 to 314; these read FMINVLLLIVPILLAVAFLTL, MFIIAPILALTLALTMWIPLP, LGILFMLAMSSLAVYSILWSG, AIILLSVLLMSGSFTLSTLII, YLWLIFPSWPLAMMWFISTLA, AGPFALFFLAEYANIIMMNIF, ELYSINFTIKALLLTCSFLWI, and LPLTLALCMWHVSLPIMLSSI.

It belongs to the complex I subunit 1 family. Core subunit of respiratory chain NADH dehydrogenase (Complex I) which is composed of 45 different subunits.

The protein resides in the mitochondrion inner membrane. It catalyses the reaction a ubiquinone + NADH + 5 H(+)(in) = a ubiquinol + NAD(+) + 4 H(+)(out). Core subunit of the mitochondrial membrane respiratory chain NADH dehydrogenase (Complex I) which catalyzes electron transfer from NADH through the respiratory chain, using ubiquinone as an electron acceptor. Essential for the catalytic activity and assembly of complex I. In Equus caballus (Horse), this protein is NADH-ubiquinone oxidoreductase chain 1 (MT-ND1).